We begin with the raw amino-acid sequence, 250 residues long: N-acetylmuramoyl-L-alanine amidase CwlH (250 aa).

Residues 1–44 (MVTIKKDFIPVSNDNRPGYAMAPAYITVHNTANTAKGADAKMHA) form the signal peptide. One can recognise an N-acetylmuramoyl-L-alanine amidase domain in the interval 45–141 (KFVKNPNTSE…KKWSGKECPR (97 aa)).

The protein belongs to the N-acetylmuramoyl-L-alanine amidase 2 family.

The protein resides in the secreted. It carries out the reaction Hydrolyzes the link between N-acetylmuramoyl residues and L-amino acid residues in certain cell-wall glycopeptides.. In terms of biological role, autolysins are involved in some important biological processes such as cell separation, cell-wall turnover, competence for genetic transformation, formation of the flagella and sporulation. Could play a role in mother cell lysis with CwlC. In Bacillus subtilis (strain 168), this protein is N-acetylmuramoyl-L-alanine amidase CwlH (cwlH).